Consider the following 296-residue polypeptide: Cyclin-dependent kinase 1 (296 aa).

In terms of domain architecture, Protein kinase spans 5 to 288; it reads FQKLEKIGEG…AKNGLSHKYF (284 aa). Residues 11 to 19 and Lys34 contribute to the ATP site; that span reads IGEGTYGVV. Asp130 acts as the Proton acceptor in catalysis.

It belongs to the protein kinase superfamily. CMGC Ser/Thr protein kinase family. CDC2/CDKX subfamily.

It localises to the nucleus. The catalysed reaction is L-seryl-[protein] + ATP = O-phospho-L-seryl-[protein] + ADP + H(+). The enzyme catalyses L-threonyl-[protein] + ATP = O-phospho-L-threonyl-[protein] + ADP + H(+). In terms of biological role, cyclin-dependent kinase that acts as a master regulator of the mitotic and meiotic cell cycles. In Encephalitozoon cuniculi (strain GB-M1) (Microsporidian parasite), this protein is Cyclin-dependent kinase 1.